The chain runs to 451 residues: Bifunctional protein GlmU (451 aa).

The segment at methionine 1–arginine 225 is pyrophosphorylase. Residues leucine 7 to glycine 10, lysine 21, glutamine 72, and glycine 77 to threonine 78 each bind UDP-N-acetyl-alpha-D-glucosamine. Aspartate 102 contributes to the Mg(2+) binding site. Glycine 139, glutamate 154, asparagine 169, and asparagine 223 together coordinate UDP-N-acetyl-alpha-D-glucosamine. Asparagine 223 provides a ligand contact to Mg(2+). A linker region spans residues leucine 226 to alanine 246. Positions glycine 247 to serine 451 are N-acetyltransferase. Arginine 328 and lysine 346 together coordinate UDP-N-acetyl-alpha-D-glucosamine. Histidine 358 (proton acceptor) is an active-site residue. 2 residues coordinate UDP-N-acetyl-alpha-D-glucosamine: tyrosine 361 and asparagine 372. Acetyl-CoA contacts are provided by residues alanine 375, asparagine 381–tyrosine 382, serine 400, alanine 418, and arginine 435.

The protein in the N-terminal section; belongs to the N-acetylglucosamine-1-phosphate uridyltransferase family. This sequence in the C-terminal section; belongs to the transferase hexapeptide repeat family. Homotrimer. It depends on Mg(2+) as a cofactor.

It is found in the cytoplasm. It catalyses the reaction alpha-D-glucosamine 1-phosphate + acetyl-CoA = N-acetyl-alpha-D-glucosamine 1-phosphate + CoA + H(+). The enzyme catalyses N-acetyl-alpha-D-glucosamine 1-phosphate + UTP + H(+) = UDP-N-acetyl-alpha-D-glucosamine + diphosphate. It participates in nucleotide-sugar biosynthesis; UDP-N-acetyl-alpha-D-glucosamine biosynthesis; N-acetyl-alpha-D-glucosamine 1-phosphate from alpha-D-glucosamine 6-phosphate (route II): step 2/2. It functions in the pathway nucleotide-sugar biosynthesis; UDP-N-acetyl-alpha-D-glucosamine biosynthesis; UDP-N-acetyl-alpha-D-glucosamine from N-acetyl-alpha-D-glucosamine 1-phosphate: step 1/1. The protein operates within bacterial outer membrane biogenesis; LPS lipid A biosynthesis. Functionally, catalyzes the last two sequential reactions in the de novo biosynthetic pathway for UDP-N-acetylglucosamine (UDP-GlcNAc). The C-terminal domain catalyzes the transfer of acetyl group from acetyl coenzyme A to glucosamine-1-phosphate (GlcN-1-P) to produce N-acetylglucosamine-1-phosphate (GlcNAc-1-P), which is converted into UDP-GlcNAc by the transfer of uridine 5-monophosphate (from uridine 5-triphosphate), a reaction catalyzed by the N-terminal domain. This chain is Bifunctional protein GlmU, found in Nostoc sp. (strain PCC 7120 / SAG 25.82 / UTEX 2576).